Consider the following 209-residue polypeptide: Uracil phosphoribosyltransferase (209 aa).

Residues R79, R104, and 131-139 (DPMLATGGS) contribute to the 5-phospho-alpha-D-ribose 1-diphosphate site. Residues I194 and 199–201 (GDA) contribute to the uracil site. D200 serves as a coordination point for 5-phospho-alpha-D-ribose 1-diphosphate.

The protein belongs to the UPRTase family. Requires Mg(2+) as cofactor.

The catalysed reaction is UMP + diphosphate = 5-phospho-alpha-D-ribose 1-diphosphate + uracil. The protein operates within pyrimidine metabolism; UMP biosynthesis via salvage pathway; UMP from uracil: step 1/1. Its activity is regulated as follows. Allosterically activated by GTP. Its function is as follows. Catalyzes the conversion of uracil and 5-phospho-alpha-D-ribose 1-diphosphate (PRPP) to UMP and diphosphate. This chain is Uracil phosphoribosyltransferase, found in Ligilactobacillus salivarius (strain UCC118) (Lactobacillus salivarius).